Consider the following 630-residue polypeptide: MAAVAMTPNPVQTLQEEAVCAICLDYFTDPVSIGCGHNFCRVCVTQLWGGEDEEDRDELDREEEEEEVGEEEEVEAVGAGGGWDTPMREEDYEGDMEEEAEEEEEVFWSSGIGGSNWDNMDYVWEEEEEEEEEELDYYLGDVADLRGEDEDEEEEVLEEDEEEELDPITQLPPPPAPRRCFTCPQCRKSFPRRSFRPNLQLANMVQVIRQMHPTPGRGSRVNEQGICPRHQEALKLFCEVDEEAICVVCRESRSHKQHSVVPLEEVVQEYKAKLQGHVEPLRKHLEAVQKMKAKEERRVTELKSQMKSELAAVASEFGRLTRFLAEEQAGLERRLREMHEAQLGRAGAAANRLEEQAAQLSRLLAEAQERSQQGGLRLLQDIKETFNRCEEIQLQPPEIWSPDPCQPHSHDFLTDAIVRKMSRMFCQAARVDLTLDPDTAHPALLLSPDRRGVRLAERRQEVPEHSKRFSADCCVLGAQGFRSGRHYWEVEVGGRRGWAVGAARESTHHKEKVGSGGSSVSSGDASSSRHHHRRRRLHLPQQLLLQREVWCVGTHGKRYQAQSSTEQTLLSPCEKPRRFGVYLDYEAGRLGFYNADTLAHVHTFSAAFLGERVFPFFRVLSKGTRIKLCP.

Residues 20 to 61 form an RING-type; degenerate zinc finger; it reads CAICLDYFTDPVSIGCGHNFCRVCVTQLWGGEDEEDRDELDR. The segment covering 51–75 has biased composition (acidic residues); that stretch reads EDEEDRDELDREEEEEEVGEEEEVE. Disordered regions lie at residues 51–97 and 148–176; these read EDEE…GDME and EDED…PPPA. Phosphothreonine is present on T85. Residues 148 to 166 are compositionally biased toward acidic residues; that stretch reads EDEDEEEEVLEEDEEEELD. Residues 222 to 263 form a B box-type zinc finger; that stretch reads NEQGICPRHQEALKLFCEVDEEAICVVCRESRSHKQHSVVPL. Zn(2+) is bound by residues C227, H230, C249, and H255. A Glycyl lysine isopeptide (Lys-Gly) (interchain with G-Cter in SUMO2) cross-link involves residue K256. A coiled-coil region spans residues 281–374; the sequence is LRKHLEAVQK…AEAQERSQQG (94 aa). One can recognise a B30.2/SPRY domain in the interval 413-630; it reads LTDAIVRKMS…SKGTRIKLCP (218 aa). S447 bears the Phosphoserine mark. A disordered region spans residues 503 to 535; it reads ARESTHHKEKVGSGGSSVSSGDASSSRHHHRRR.

The protein belongs to the TRIM/RBCC family. Interacts with PRKCA. Interacts with NOD2. Interacts with TRIM17; this interaction prevents TRIM41 activity on ZSCAN2. Post-translationally, auto-ubiquitinated.

It localises to the cytoplasm. Its subcellular location is the nucleus. The enzyme catalyses S-ubiquitinyl-[E2 ubiquitin-conjugating enzyme]-L-cysteine + [acceptor protein]-L-lysine = [E2 ubiquitin-conjugating enzyme]-L-cysteine + N(6)-ubiquitinyl-[acceptor protein]-L-lysine.. It participates in protein modification; protein ubiquitination. E3 ligase that plays essential roles in innate antiviral response. Directly binds to influenza A virus or vesicular stomatitis virus nucleoproteins and targets them for ubiquitination and proteasomal degradation, thereby limiting viral infections. Activates the innate antiviral response by catalyzing monoubiquitination of CGAS, thereby activating CGAS. Also involved in innate antiviral response by mediating 'Lys-63'-linked polyubiquitylation of BCL10 which in turn hubs NEMO for activation of NF-kappa-B and IRF3 pathways. Catalyzes the ubiquitin-mediated degradation of other substrates including protein kinase C, ZSCAN21 or TOP3B suggesting additional roles besides its function in immune response. In Mus musculus (Mouse), this protein is E3 ubiquitin-protein ligase TRIM41.